Here is a 419-residue protein sequence, read N- to C-terminus: UDP-N-acetylmuramoylalanine--D-glutamate ligase (419 aa).

ATP is bound at residue 109–115 (GSTGKTT).

It belongs to the MurCDEF family.

The protein resides in the cytoplasm. It catalyses the reaction UDP-N-acetyl-alpha-D-muramoyl-L-alanine + D-glutamate + ATP = UDP-N-acetyl-alpha-D-muramoyl-L-alanyl-D-glutamate + ADP + phosphate + H(+). Its pathway is cell wall biogenesis; peptidoglycan biosynthesis. Cell wall formation. Catalyzes the addition of glutamate to the nucleotide precursor UDP-N-acetylmuramoyl-L-alanine (UMA). This chain is UDP-N-acetylmuramoylalanine--D-glutamate ligase, found in Chlamydia felis (strain Fe/C-56) (Chlamydophila felis).